A 346-amino-acid chain; its full sequence is NADH-ubiquinone oxidoreductase chain 2 (346 aa).

A run of 10 helical transmembrane segments spans residues P3 to S23, H25 to M45, S67 to M87, M96 to P116, I122 to L142, I145 to G165, T200 to A220, I238 to G258, N273 to M293, and F324 to V344.

The protein belongs to the complex I subunit 2 family. Core subunit of respiratory chain NADH dehydrogenase (Complex I) which is composed of 45 different subunits. Interacts with TMEM242.

It is found in the mitochondrion inner membrane. It catalyses the reaction a ubiquinone + NADH + 5 H(+)(in) = a ubiquinol + NAD(+) + 4 H(+)(out). In terms of biological role, core subunit of the mitochondrial membrane respiratory chain NADH dehydrogenase (Complex I) which catalyzes electron transfer from NADH through the respiratory chain, using ubiquinone as an electron acceptor. Essential for the catalytic activity and assembly of complex I. This Bos mutus grunniens (Wild yak) protein is NADH-ubiquinone oxidoreductase chain 2.